Consider the following 588-residue polypeptide: Aspartate--tRNA ligase (588 aa).

E174 is a binding site for L-aspartate. The interval 198-201 (QLFK) is aspartate. R220 contributes to the L-aspartate binding site. Residues 220 to 222 (RDE) and Q229 contribute to the ATP site. L-aspartate is bound at residue H448. E482 lines the ATP pocket. R489 serves as a coordination point for L-aspartate. Residue 534–537 (GLDR) coordinates ATP.

The protein belongs to the class-II aminoacyl-tRNA synthetase family. Type 1 subfamily. Homodimer.

It is found in the cytoplasm. The catalysed reaction is tRNA(Asp) + L-aspartate + ATP = L-aspartyl-tRNA(Asp) + AMP + diphosphate. Catalyzes the attachment of L-aspartate to tRNA(Asp) in a two-step reaction: L-aspartate is first activated by ATP to form Asp-AMP and then transferred to the acceptor end of tRNA(Asp). The chain is Aspartate--tRNA ligase from Exiguobacterium sibiricum (strain DSM 17290 / CCUG 55495 / CIP 109462 / JCM 13490 / 255-15).